A 158-amino-acid chain; its full sequence is Phosphopantetheine adenylyltransferase (158 aa).

T10 serves as a coordination point for substrate. ATP-binding positions include 10–11 (TF) and H18. 3 residues coordinate substrate: K42, L74, and R88. ATP is bound by residues 89 to 91 (GIR), E99, and 124 to 130 (WRYLSST).

The protein belongs to the bacterial CoaD family. In terms of assembly, homohexamer. Mg(2+) serves as cofactor.

It is found in the cytoplasm. The enzyme catalyses (R)-4'-phosphopantetheine + ATP + H(+) = 3'-dephospho-CoA + diphosphate. It functions in the pathway cofactor biosynthesis; coenzyme A biosynthesis; CoA from (R)-pantothenate: step 4/5. In terms of biological role, reversibly transfers an adenylyl group from ATP to 4'-phosphopantetheine, yielding dephospho-CoA (dPCoA) and pyrophosphate. This is Phosphopantetheine adenylyltransferase from Actinobacillus pleuropneumoniae serotype 5b (strain L20).